Reading from the N-terminus, the 137-residue chain is Large-conductance mechanosensitive channel (137 aa).

2 helical membrane-spanning segments follow: residues 9 to 29 (AFAVKGNVVDMAVGIIIGAAF) and 79 to 99 (IQTVLDFVIVAFAIFMGVKAI).

Belongs to the MscL family. Homopentamer.

Its subcellular location is the cell inner membrane. Functionally, channel that opens in response to stretch forces in the membrane lipid bilayer. May participate in the regulation of osmotic pressure changes within the cell. This is Large-conductance mechanosensitive channel from Pseudomonas aeruginosa (strain ATCC 15692 / DSM 22644 / CIP 104116 / JCM 14847 / LMG 12228 / 1C / PRS 101 / PAO1).